Consider the following 474-residue polypeptide: Aspartyl/glutamyl-tRNA(Asn/Gln) amidotransferase subunit B (474 aa).

Belongs to the GatB/GatE family. GatB subfamily. As to quaternary structure, heterotrimer of A, B and C subunits.

The catalysed reaction is L-glutamyl-tRNA(Gln) + L-glutamine + ATP + H2O = L-glutaminyl-tRNA(Gln) + L-glutamate + ADP + phosphate + H(+). The enzyme catalyses L-aspartyl-tRNA(Asn) + L-glutamine + ATP + H2O = L-asparaginyl-tRNA(Asn) + L-glutamate + ADP + phosphate + 2 H(+). Its function is as follows. Allows the formation of correctly charged Asn-tRNA(Asn) or Gln-tRNA(Gln) through the transamidation of misacylated Asp-tRNA(Asn) or Glu-tRNA(Gln) in organisms which lack either or both of asparaginyl-tRNA or glutaminyl-tRNA synthetases. The reaction takes place in the presence of glutamine and ATP through an activated phospho-Asp-tRNA(Asn) or phospho-Glu-tRNA(Gln). This is Aspartyl/glutamyl-tRNA(Asn/Gln) amidotransferase subunit B from Coprothermobacter proteolyticus (strain ATCC 35245 / DSM 5265 / OCM 4 / BT).